The sequence spans 1771 residues: Replicase polyprotein (1771 aa).

Residues 1–29 (MSFQQTNNNATNNINSLEELAAQELIAAQ) adopt a coiled-coil conformation. A BC-box region spans residues 16–25 (SLEELAAQEL). The interaction with and inhibition of host AGO2 stretch occupies residues 106 to 114 (PEHRYGSTF). In terms of domain architecture, SF3 helicase spans 482–656 (AKSLYEQVLL…QEKSIWVRNA (175 aa)). 510–517 (GESGIGKT) serves as a coordination point for ATP. Positions 919 to 942 (VEVGSSGDSKTQKQRNTKVEVGKE) are disordered. Positions 954 to 1201 (DPAAHALVLD…YACPLTQEAI (248 aa)) constitute a Peptidase C3 domain. Active-site for picornain 3C-like protease activity residues include H1003, D1063, and C1162. A coiled-coil region spans residues 1385 to 1413 (GEQYDFTSQRAQELRRDVEELIDNCAKGI). In terms of domain architecture, RdRp catalytic spans 1495 to 1634 (NKVIAGDFGN…NISDRVVEWF (140 aa)).

Interacts with host AGO2; this interaction leads to AGO2 degradation via an E3 ubiquitin ligase-dependent pathway and may block the RNA-induced silencing complexes (RISC) activity. Post-translationally, might be expressed through a ribosomal skip from one codon to the next without formation of a peptide bond.

The protein localises to the host cytoplasm. It localises to the host perinuclear region. It catalyses the reaction RNA(n) + a ribonucleoside 5'-triphosphate = RNA(n+1) + diphosphate. Functionally, suppressor of RNA-mediated gene silencing, an antiviral defense mechanism of insect cells. Inhibits siRNA function through the direct enzymatic inactivation of host AGO2, but does not interfere with miRNA pathway. Facilitates viral replication via the recruitment of a cellular ubiquitin ligase complex that promotes host AGO2 degradation. Inhibits the integrated stress response (ISR) in the infected cell possiby by degrading host Nup358. Stress granule formation is thus inhibited, which allows protein synthesis and viral replication. Does not bind to dsRNA or siRNA. Replicates the genomic and antigenomic RNA. This Teleogryllus oceanicus (black field cricket) protein is Replicase polyprotein.